Here is a 582-residue protein sequence, read N- to C-terminus: Trans-ocimene synthase, chloroplastic (582 aa).

A chloroplast-targeting transit peptide spans 1–35 (MSLIIQSLPHWSRIPPRPPQLSQFQNSSRPKPLIQ). Residues arginine 296, aspartate 333, aspartate 337, arginine 474, and aspartate 477 each contribute to the (2E)-geranyl diphosphate site. Mg(2+)-binding residues include aspartate 333 and aspartate 337. The DDXXD motif signature appears at 333 to 337 (DDIYD). Positions 477, 481, and 485 each coordinate Mg(2+).

Belongs to the terpene synthase family. Tpsb subfamily. In terms of assembly, monomer. Requires Mg(2+) as cofactor. The cofactor is Mn(2+). As to expression, expressed in male and female leaves. Barely detectable in fruits and shoots.

The protein localises to the plastid. Its subcellular location is the chloroplast. It catalyses the reaction (2E)-geranyl diphosphate = (E)-beta-ocimene + diphosphate. Its pathway is secondary metabolite biosynthesis; terpenoid biosynthesis. Functionally, monoterpene synthase (TPS) involved in the biosynthesis of monoterpene natural products used by traditional Chinese medicine to treat headache, inflammation and intoxication. Catalyzes the conversion of (2E)-geranyl diphosphate (GPP) into (E)-beta-ocimene. In Litsea cubeba (Aromatic litsea), this protein is Trans-ocimene synthase, chloroplastic.